Consider the following 217-residue polypeptide: uncharacterized protein (217 aa).

This sequence belongs to the IIV-6 309L family.

This is an uncharacterized protein from Acheta domesticus (House cricket).